A 248-amino-acid polypeptide reads, in one-letter code: Probable transcriptional regulatory protein Nwi_2729 (248 aa).

Positions 1–21 (MAGHSQFKNIMHRKGRQDAQK) are disordered.

This sequence belongs to the TACO1 family.

The protein resides in the cytoplasm. The polypeptide is Probable transcriptional regulatory protein Nwi_2729 (Nitrobacter winogradskyi (strain ATCC 25391 / DSM 10237 / CIP 104748 / NCIMB 11846 / Nb-255)).